We begin with the raw amino-acid sequence, 657 residues long: Interferon-induced GTP-binding protein Mx1 (657 aa).

At Met1 the chain carries N-acetylmethionine. The Dynamin-type G domain occupies 63–336 (DLALPAIAVI…LITHICKTLP (274 aa)). The interval 73–80 (GDQSSGKS) is G1 motif. 73-80 (GDQSSGKS) lines the GTP pocket. Residues 98–100 (VTR) are G2 motif. Residues 174 to 177 (DLPG) form a G3 motif region. Residues 174–178 (DLPGI) and 243–246 (TKPD) each bind GTP. The segment at 243–246 (TKPD) is G4 motif. The segment at 275 to 278 (KCRG) is G5 motif. A bundle signaling element (BSE) region spans residues 337-362 (LLENQIKENHEKITEELQKYGSDVPE). The tract at residues 362–529 (EDEHEKMFFL…HFQMEQIVYC (168 aa)) is middle domain. Positions 363–627 (DEHEKMFFLI…KDTYSWLLKE (265 aa)) are stalk. Residues 540 to 551 (RVREKDSDEEKK) show a composition bias toward basic and acidic residues. Residues 540–559 (RVREKDSDEEKKKKTSSMSH) form a disordered region. The critical for lipid-binding stretch occupies residues 550-553 (KKKK). The GED domain maps to 569–657 (LSEILEHLLA…ARRRLAKFPG (89 aa)).

Belongs to the TRAFAC class dynamin-like GTPase superfamily. Dynamin/Fzo/YdjA family. Homooligomer. Oligomerizes into multimeric filamentous or ring-like structures by virtue of its stalk domain. Oligomerization is critical for GTPase activity, protein stability, and recognition of viral target structures. Interacts with TRPC1, TRPC3, TRPC4, TRPC5, TRPC6 and TRPC7. Interacts with HSPA5. Interacts with TUBB/TUBB5. Interacts with DDX39A and DDX39B. ISGylated.

Its subcellular location is the cytoplasm. The protein localises to the endoplasmic reticulum membrane. The protein resides in the perinuclear region. In terms of biological role, interferon-induced dynamin-like GTPase with antiviral activity. In Canis lupus familiaris (Dog), this protein is Interferon-induced GTP-binding protein Mx1 (MX1).